The following is a 553-amino-acid chain: Mucolipin-3 (553 aa).

The Cytoplasmic segment spans residues 1–62; sequence MADPEVVVSS…FWARGRKPWK (62 aa). The segment at 52 to 62 is interaction with phosphoinositides; sequence KFWARGRKPWK. Residues 63-83 form a helical membrane-spanning segment; sequence LAIQILKIAMVTIQLVLFGLS. Over 84–283 the chain is Extracellular; the sequence is NQMVVAFKEE…VSGSIQKNTH (200 aa). An extracellular/lumenal pore loop region spans residues 104–118; sequence KGYMDRMDDTYAVYT. N-linked (GlcNAc...) asparagine glycosylation is found at asparagine 138, asparagine 172, and asparagine 205. A disulfide bridge connects residues cysteine 159 and cysteine 185. A disulfide bridge connects residues cysteine 238 and cysteine 269. A helical transmembrane segment spans residues 284–304; the sequence is YMMIFDAFVILTCLVSLILCI. Residues 305–341 lie on the Cytoplasmic side of the membrane; sequence RSVIRGLQLQQEFVNFFLLHYKKEVSVSDQMEFVNGW. The helical transmembrane segment at 342 to 362 threads the bilayer; it reads YIMIIISDILTIIGSILKMEI. Residues 363-371 are Extracellular-facing; the sequence is QAKSLTSYD. The chain crosses the membrane as a helical span at residues 372–392; the sequence is VCSILLGTSTMLVWLGVIRYL. Topologically, residues 393–414 are cytoplasmic; the sequence is GFFAKYNLLILTLQAALPNVIR. A helical membrane pass occupies residues 415–435; that stretch reads FCCCAAMIYLGYCFCGWIVLG. The Extracellular portion of the chain corresponds to 436 to 443; it reads PYHDKFRS. The pore-forming intramembrane region spans 444-464; sequence LNMVSECLFSLINGDDMFATF. The Selectivity filter motif lies at 456–459; sequence NGDD. At 465-475 the chain is on the extracellular side; the sequence is AKMQQKSYLVW. Residues 476-497 form a helical membrane-spanning segment; sequence LFSRIYLYSFISLFIYMILSLF. Topologically, residues 498–553 are cytoplasmic; sequence IALITDTYETIKQYQQDGFPETELRTFISECKDLPNSGKYRLEDDPPVSLFCCCKK.

The protein belongs to the transient receptor (TC 1.A.4) family. Polycystin subfamily. MCOLN3 sub-subfamily. As to quaternary structure, homotetramer. Can heterooligomerize with MCOLN1; heteromeric assemblies have different channel properties as compared to the respective homooligomers and may be tissue-specific. May heterooligomerize with TRPV5 to form a functional distinct ion channel. Interacts with GABARAPL2. Post-translationally, N-glycosylated.

It is found in the cell membrane. The protein localises to the early endosome membrane. The protein resides in the late endosome membrane. Its subcellular location is the lysosome membrane. It localises to the cytoplasmic vesicle. It is found in the autophagosome membrane. The enzyme catalyses Ca(2+)(in) = Ca(2+)(out). It carries out the reaction K(+)(in) = K(+)(out). It catalyses the reaction Na(+)(in) = Na(+)(out). Its activity is regulated as follows. Channel activity is activated by PtdIns(3,5)P2 (phosphatidylinositol 3,5-bisphosphate). Inhibited by lumenal H(+) and Na(+). The channel pore shows dynamic behavior and undergoes spontaneous, Ca(2+)-dependent modulation when conducting Ca(2+). In terms of biological role, nonselective cation channel probably playing a role in the regulation of membrane trafficking events. Acts as a Ca(2+)-permeable cation channel with inwardly rectifying activity. Mediates release of Ca(2+) from endosomes to the cytoplasm, contributes to endosomal acidification and is involved in the regulation of membrane trafficking and fusion in the endosomal pathway. Also permeable to Mg(2+), Na(+) and K(+). Does not seem to act as mechanosensory transduction channel in inner ear sensory hair cells. Proposed to play a critical role at the cochlear stereocilia ankle-link region during hair-bundle growth. Involved in the regulation of autophagy. Through association with GABARAPL2 may be involved in autophagosome formation possibly providing Ca(2+) for the fusion process. Through a possible and probably tissue-specific heteromerization with MCOLN1 may be at least in part involved in many lysosome-dependent cellular events. Possible heteromeric ion channel assemblies with TRPV5 show pharmacological similarity with TRPML3. The protein is Mucolipin-3 (MCOLN3) of Homo sapiens (Human).